The primary structure comprises 469 residues: Glutamate--tRNA ligase 1 (469 aa).

The 'HIGH' region signature appears at 11–21 (PSPTGHLHLGG). Positions 238–242 (KLSKR) match the 'KMSKS' region motif. Lys241 is an ATP binding site.

This sequence belongs to the class-I aminoacyl-tRNA synthetase family. Glutamate--tRNA ligase type 1 subfamily. Monomer.

The protein localises to the cytoplasm. It carries out the reaction tRNA(Glu) + L-glutamate + ATP = L-glutamyl-tRNA(Glu) + AMP + diphosphate. Its function is as follows. Catalyzes the attachment of glutamate to tRNA(Glu) in a two-step reaction: glutamate is first activated by ATP to form Glu-AMP and then transferred to the acceptor end of tRNA(Glu). This is Glutamate--tRNA ligase 1 from Ehrlichia canis (strain Jake).